A 100-amino-acid chain; its full sequence is Small ribosomal subunit protein uS14c (100 aa).

The protein belongs to the universal ribosomal protein uS14 family. Part of the 30S ribosomal subunit.

The protein resides in the plastid. The protein localises to the chloroplast. Its function is as follows. Binds 16S rRNA, required for the assembly of 30S particles. In Aethionema grandiflorum (Persian stone-cress), this protein is Small ribosomal subunit protein uS14c.